The sequence spans 466 residues: CCA-adding enzyme (466 aa).

ATP-binding residues include Ser-55 and Arg-58. Residues Ser-55 and Arg-58 each coordinate CTP. 3 residues coordinate Mg(2+): Asp-67, Asp-69, and Asp-118. 3 residues coordinate ATP: His-141, Lys-161, and Tyr-170. Residues His-141, Lys-161, and Tyr-170 each coordinate CTP.

It belongs to the tRNA nucleotidyltransferase/poly(A) polymerase family. Archaeal CCA-adding enzyme subfamily. In terms of assembly, homodimer. Mg(2+) is required as a cofactor.

The enzyme catalyses a tRNA precursor + 2 CTP + ATP = a tRNA with a 3' CCA end + 3 diphosphate. The catalysed reaction is a tRNA with a 3' CCA end + 2 CTP + ATP = a tRNA with a 3' CCACCA end + 3 diphosphate. In terms of biological role, catalyzes the addition and repair of the essential 3'-terminal CCA sequence in tRNAs without using a nucleic acid template. Adds these three nucleotides in the order of C, C, and A to the tRNA nucleotide-73, using CTP and ATP as substrates and producing inorganic pyrophosphate. tRNA 3'-terminal CCA addition is required both for tRNA processing and repair. Also involved in tRNA surveillance by mediating tandem CCA addition to generate a CCACCA at the 3' terminus of unstable tRNAs. While stable tRNAs receive only 3'-terminal CCA, unstable tRNAs are marked with CCACCA and rapidly degraded. This is CCA-adding enzyme from Haloarcula marismortui (strain ATCC 43049 / DSM 3752 / JCM 8966 / VKM B-1809) (Halobacterium marismortui).